The sequence spans 234 residues: MSKVSKRISEVRNKIENKPYKAIEALNLLKDTATAKFVESAEAHIALKLDTKYADQQLRTTLVLPKGTGKKIRIAVIAEGEKATEAINAGADLAGSTDLVQDIMKGMLDFDRLIATPDMMPLIAKLGKVLGPRGLMPSPKSGTVTSDVKSAIEEFKKGKLEYRADKSGIVHISFGKTNFSVNDLLLNLEAVQESIDKNRPAGVKGKYWKSFYICSTMGPSIQLDISEFRDKNFQ.

Belongs to the universal ribosomal protein uL1 family. In terms of assembly, part of the 50S ribosomal subunit.

It localises to the plastid. The protein localises to the chloroplast. Its function is as follows. Binds directly to 23S rRNA. Might be involved in E site tRNA release (Potential). In Guillardia theta (Cryptophyte), this protein is Large ribosomal subunit protein uL1c (rpl1).